The following is a 177-amino-acid chain: Large ribosomal subunit protein uL6 (177 aa).

It belongs to the universal ribosomal protein uL6 family. Part of the 50S ribosomal subunit.

Functionally, this protein binds to the 23S rRNA, and is important in its secondary structure. It is located near the subunit interface in the base of the L7/L12 stalk, and near the tRNA binding site of the peptidyltransferase center. The sequence is that of Large ribosomal subunit protein uL6 from Parvibaculum lavamentivorans (strain DS-1 / DSM 13023 / NCIMB 13966).